Reading from the N-terminus, the 198-residue chain is Pyridoxal 5'-phosphate synthase subunit PdxT (198 aa).

49-51 (GES) provides a ligand contact to L-glutamine. Cys-81 acts as the Nucleophile in catalysis. L-glutamine-binding positions include Arg-113 and 141–142 (IR). Active-site charge relay system residues include His-177 and Glu-179.

This sequence belongs to the glutaminase PdxT/SNO family. In the presence of PdxS, forms a dodecamer of heterodimers. Only shows activity in the heterodimer.

The catalysed reaction is aldehydo-D-ribose 5-phosphate + D-glyceraldehyde 3-phosphate + L-glutamine = pyridoxal 5'-phosphate + L-glutamate + phosphate + 3 H2O + H(+). The enzyme catalyses L-glutamine + H2O = L-glutamate + NH4(+). Its pathway is cofactor biosynthesis; pyridoxal 5'-phosphate biosynthesis. Catalyzes the hydrolysis of glutamine to glutamate and ammonia as part of the biosynthesis of pyridoxal 5'-phosphate. The resulting ammonia molecule is channeled to the active site of PdxS. This Mycobacterium leprae (strain TN) protein is Pyridoxal 5'-phosphate synthase subunit PdxT.